We begin with the raw amino-acid sequence, 328 residues long: GMP reductase (328 aa).

Cys-176 serves as the catalytic Thioimidate intermediate. Ile-205–Val-228 lines the NADP(+) pocket.

This sequence belongs to the IMPDH/GMPR family. GuaC type 2 subfamily.

It catalyses the reaction IMP + NH4(+) + NADP(+) = GMP + NADPH + 2 H(+). Its function is as follows. Catalyzes the irreversible NADPH-dependent deamination of GMP to IMP. It functions in the conversion of nucleobase, nucleoside and nucleotide derivatives of G to A nucleotides, and in maintaining the intracellular balance of A and G nucleotides. In Bacillus cereus (strain ATCC 14579 / DSM 31 / CCUG 7414 / JCM 2152 / NBRC 15305 / NCIMB 9373 / NCTC 2599 / NRRL B-3711), this protein is GMP reductase.